Consider the following 272-residue polypeptide: Undecaprenyl-diphosphatase (272 aa).

The next 7 membrane-spanning stretches (helical) occupy residues 42–62, 92–112, 120–140, 149–169, 194–214, 224–244, and 252–272; these read FGLS…VVFF, YLVL…EDFF, WVVV…EAVG, MGFA…VPGV, FLMS…EVLA, MFAV…RFFI, and LRAF…LLLL.

Belongs to the UppP family.

It is found in the cell membrane. The catalysed reaction is di-trans,octa-cis-undecaprenyl diphosphate + H2O = di-trans,octa-cis-undecaprenyl phosphate + phosphate + H(+). Functionally, catalyzes the dephosphorylation of undecaprenyl diphosphate (UPP). Confers resistance to bacitracin. This Rubrobacter xylanophilus (strain DSM 9941 / JCM 11954 / NBRC 16129 / PRD-1) protein is Undecaprenyl-diphosphatase.